A 592-amino-acid chain; its full sequence is Putative D-/L-hydantoinase subunit B (592 aa).

This sequence belongs to the HyuB family. As to quaternary structure, may form a complex with HyuA.

Involved in the asymmetric conversion of racemic 5-substituted hydantoins to the corresponding L-amino acids. HyuA and HyuB are both required for the conversion of D- and L-5-substituted hydantoins to corresponding N-carbamoyl-D- and N-carbamoyl-L-amino acids, respectively. The protein is Putative D-/L-hydantoinase subunit B of Pseudomonas sp. (strain NS671).